A 351-amino-acid chain; its full sequence is Uroporphyrinogen decarboxylase (351 aa).

Substrate-binding positions include Arg-25 to Arg-29, Asp-74, Tyr-151, Ser-206, and His-325.

This sequence belongs to the uroporphyrinogen decarboxylase family. Homodimer.

It is found in the cytoplasm. The catalysed reaction is uroporphyrinogen III + 4 H(+) = coproporphyrinogen III + 4 CO2. The protein operates within porphyrin-containing compound metabolism; protoporphyrin-IX biosynthesis; coproporphyrinogen-III from 5-aminolevulinate: step 4/4. In terms of biological role, catalyzes the decarboxylation of four acetate groups of uroporphyrinogen-III to yield coproporphyrinogen-III. The sequence is that of Uroporphyrinogen decarboxylase from Chlorobaculum parvum (strain DSM 263 / NCIMB 8327) (Chlorobium vibrioforme subsp. thiosulfatophilum).